The primary structure comprises 224 residues: Phosphoribosylformylglycinamidine synthase subunit PurQ (224 aa).

Residues 2–224 (KIAVIVFPGS…SLLEEGKVKG (223 aa)) form the Glutamine amidotransferase type-1 domain. The active-site Nucleophile is the Cys-86. Active-site residues include His-195 and Glu-197.

Part of the FGAM synthase complex composed of 1 PurL, 1 PurQ and 2 PurS subunits.

The protein localises to the cytoplasm. The catalysed reaction is N(2)-formyl-N(1)-(5-phospho-beta-D-ribosyl)glycinamide + L-glutamine + ATP + H2O = 2-formamido-N(1)-(5-O-phospho-beta-D-ribosyl)acetamidine + L-glutamate + ADP + phosphate + H(+). The enzyme catalyses L-glutamine + H2O = L-glutamate + NH4(+). Its pathway is purine metabolism; IMP biosynthesis via de novo pathway; 5-amino-1-(5-phospho-D-ribosyl)imidazole from N(2)-formyl-N(1)-(5-phospho-D-ribosyl)glycinamide: step 1/2. Part of the phosphoribosylformylglycinamidine synthase complex involved in the purines biosynthetic pathway. Catalyzes the ATP-dependent conversion of formylglycinamide ribonucleotide (FGAR) and glutamine to yield formylglycinamidine ribonucleotide (FGAM) and glutamate. The FGAM synthase complex is composed of three subunits. PurQ produces an ammonia molecule by converting glutamine to glutamate. PurL transfers the ammonia molecule to FGAR to form FGAM in an ATP-dependent manner. PurS interacts with PurQ and PurL and is thought to assist in the transfer of the ammonia molecule from PurQ to PurL. The chain is Phosphoribosylformylglycinamidine synthase subunit PurQ from Ligilactobacillus salivarius (strain UCC118) (Lactobacillus salivarius).